The primary structure comprises 827 residues: Glycerol-3-phosphate acyltransferase (827 aa).

An HXXXXD motif motif is present at residues 325 to 330 (CHRSHM).

Belongs to the GPAT/DAPAT family.

Its subcellular location is the cell inner membrane. It catalyses the reaction sn-glycerol 3-phosphate + an acyl-CoA = a 1-acyl-sn-glycero-3-phosphate + CoA. Its pathway is phospholipid metabolism; CDP-diacylglycerol biosynthesis; CDP-diacylglycerol from sn-glycerol 3-phosphate: step 1/3. This is Glycerol-3-phosphate acyltransferase from Shigella dysenteriae serotype 1 (strain Sd197).